Reading from the N-terminus, the 206-residue chain is MLPPAIHFYLLPLACILMKSCLAFKNDATEILYSHVVKPVPAHPSSNSTLNQARNGGRHFSNTGLDRNTRVQVGCRELRSTKYISDGQCTSISPLKELVCAGECLPLPVLPNWIGGGYGTKYWSRRSSQEWRCVNDKTRTQRIQLQCQDGSTRTYKITVVTACKCKRYTRQHNESSHNFESMSPAKPVQHHRERKRASKSSKHSMS.

Positions 1–23 (MLPPAIHFYLLPLACILMKSCLA) are cleaved as a signal peptide. Asn47 carries an N-linked (GlcNAc...) asparagine glycan. 4 disulfides stabilise this stretch: Cys75-Cys133, Cys89-Cys147, Cys100-Cys163, and Cys104-Cys165. The 96-residue stretch at 75 to 170 (CRELRSTKYI…TACKCKRYTR (96 aa)) folds into the CTCK domain. An N-linked (GlcNAc...) asparagine glycan is attached at Asn173. The segment at 174-206 (ESSHNFESMSPAKPVQHHRERKRASKSSKHSMS) is disordered. Residues 188 to 206 (VQHHRERKRASKSSKHSMS) show a composition bias toward basic residues.

It belongs to the sclerostin family. In terms of assembly, interacts with BMP2, BMP4, BMP6 and BMP7 with high affinity. In terms of tissue distribution, highly expressed in kidney and weakly in lung.

It localises to the secreted. May be involved in the onset of endometrial receptivity for implantation/sensitization for the decidual cell reaction Enhances Wnt signaling and inhibits TGF-beta signaling. Directly antagonizes activity of BMP2, BMP4, BMP6 and BMP7 in a dose-dependent manner. The polypeptide is Sclerostin domain-containing protein 1 (SOSTDC1) (Homo sapiens (Human)).